The primary structure comprises 91 residues: ATP synthase subunit c (91 aa).

2 consecutive transmembrane segments (helical) span residues 4 to 24 and 53 to 73; these read FTMC…GTGI and IGLA…LIIL.

This sequence belongs to the ATPase C chain family. F-type ATPases have 2 components, F(1) - the catalytic core - and F(0) - the membrane proton channel. F(1) has five subunits: alpha(3), beta(3), gamma(1), delta(1), epsilon(1). F(0) has three main subunits: a(1), b(2) and c(10-14). The alpha and beta chains form an alternating ring which encloses part of the gamma chain. F(1) is attached to F(0) by a central stalk formed by the gamma and epsilon chains, while a peripheral stalk is formed by the delta and b chains.

It localises to the cell inner membrane. F(1)F(0) ATP synthase produces ATP from ADP in the presence of a proton or sodium gradient. F-type ATPases consist of two structural domains, F(1) containing the extramembraneous catalytic core and F(0) containing the membrane proton channel, linked together by a central stalk and a peripheral stalk. During catalysis, ATP synthesis in the catalytic domain of F(1) is coupled via a rotary mechanism of the central stalk subunits to proton translocation. Its function is as follows. Key component of the F(0) channel; it plays a direct role in translocation across the membrane. A homomeric c-ring of between 10-14 subunits forms the central stalk rotor element with the F(1) delta and epsilon subunits. This is ATP synthase subunit c from Geobacter sulfurreducens (strain ATCC 51573 / DSM 12127 / PCA).